The primary structure comprises 369 residues: Ribonuclease D (369 aa).

One can recognise a 3'-5' exonuclease domain in the interval 4-168 (EIITTTAQLH…CLEKLQQQLE (165 aa)). The 80-residue stretch at 207–286 (DRQGLAIIKA…TQVISQDEST (80 aa)) folds into the HRDC domain.

Belongs to the RNase D family. Requires a divalent metal cation as cofactor.

It localises to the cytoplasm. The enzyme catalyses Exonucleolytic cleavage that removes extra residues from the 3'-terminus of tRNA to produce 5'-mononucleotides.. Its function is as follows. Exonuclease involved in the 3' processing of various precursor tRNAs. Initiates hydrolysis at the 3'-terminus of an RNA molecule and releases 5'-mononucleotides. This chain is Ribonuclease D, found in Psychromonas ingrahamii (strain DSM 17664 / CCUG 51855 / 37).